Here is a 953-residue protein sequence, read N- to C-terminus: Ubiquitin carboxyl-terminal hydrolase CYLD (953 aa).

Positions 106-590 (CEERLSLFRN…LEIMIGKKKG (485 aa)) are interaction with TRIP. CAP-Gly domains lie at 153-198 (LAER…VFVA) and 253-286 (DVLP…VQLC). The disordered stretch occupies residues 318–350 (FMSRGVGDKGSSSHNKPKVTGSTSDPGSRNRSE). The span at 327 to 346 (GSSSHNKPKVTGSTSDPGSR) shows a compositional bias: polar residues. At Ser384 the chain carries Phosphoserine. The disordered stretch occupies residues 387–410 (EMSSDFGHSSPPPQPPSMNSLSSE). The interval 391-466 (DFGHSSPPPQ…MPSSSGNAHG (76 aa)) is interaction with TRAF2. A phosphoserine mark is found at Ser415 and Ser419. The interaction with IKBKG/NEMO stretch occupies residues 467–681 (LEVGSLAEVK…FTSEEKDPEE (215 aa)). The CAP-Gly 3 domain maps to 489 to 532 (GQPPGLSDVLAGLELEDECAGCTDGTFRGTRYFTCALKKALFVK). Residues 589-947 (KGIQGHYNSC…DAYMCMYQSP (359 aa)) enclose the USP domain. The active-site Nucleophile is the Cys598. The segment at 778–830 (LEDTPRQCRICGGLAMYECRECYDDPDISAGKIKQFCKTCSTQVHLHPRRLNH) is B-box. Residues Cys785, Cys788, Cys796, Cys799, Cys814, Cys817, His822, and His830 each contribute to the Zn(2+) site. His868 acts as the Proton acceptor in catalysis.

The protein belongs to the peptidase C19 family. Interacts (via CAP-Gly domain) with IKBKG/NEMO (via proline-rich C-terminal region). Interacts with TRAF2 and TRIP. Interacts with PLK1, DVL1, DVL3, MAVS, TBK1, IKKE and RIGI. Interacts (via CAP-Gly domain) with microtubules. Interacts with HDAC6 and BCL3. Interacts with MAP3K7. Identified in a complex with TRAF6 and SQSTM1. Interacts with OPTN and SQSTM1. Interacts with CEP350. Interacts with RNF31; the interaction is indirect and is mediated via SPATA2. Interacts with SPATA2 (via the PUB domain); the interaction is direct and recruits CYLD to the LUBAC complex, thereby regulating TNF-alpha-induced necroptosis. Post-translationally, phosphorylated on several serine residues by IKKA and/or IKKB in response to immune stimuli. Phosphorylation requires IKBKG. Phosphorylation abolishes TRAF2 deubiquitination, interferes with the activation of Jun kinases, and strongly reduces CD40-dependent gene activation by NF-kappa-B. Ubiquitinated. Polyubiquitinated in hepatocytes treated with palmitic acid. Ubiquitination is mediated by E3 ligase TRIM47 and leads to proteasomal degradation.

It localises to the cytoplasm. The protein localises to the perinuclear region. The protein resides in the cytoskeleton. It is found in the cell membrane. Its subcellular location is the microtubule organizing center. It localises to the centrosome. The protein localises to the spindle. The protein resides in the cilium basal body. The enzyme catalyses Thiol-dependent hydrolysis of ester, thioester, amide, peptide and isopeptide bonds formed by the C-terminal Gly of ubiquitin (a 76-residue protein attached to proteins as an intracellular targeting signal).. Functionally, deubiquitinase that specifically cleaves 'Lys-63'- and linear 'Met-1'-linked polyubiquitin chains and is involved in NF-kappa-B activation and TNF-alpha-induced necroptosis. Negatively regulates NF-kappa-B activation by deubiquitinating upstream signaling factors. Contributes to the regulation of cell survival, proliferation and differentiation via its effects on NF-kappa-B activation. Negative regulator of Wnt signaling. Inhibits HDAC6 and thereby promotes acetylation of alpha-tubulin and stabilization of microtubules. Plays a role in the regulation of microtubule dynamics, and thereby contributes to the regulation of cell proliferation, cell polarization, cell migration, and angiogenesis. Required for normal cell cycle progress and normal cytokinesis. Inhibits nuclear translocation of NF-kappa-B. Plays a role in the regulation of inflammation and the innate immune response, via its effects on NF-kappa-B activation. Dispensable for the maturation of intrathymic natural killer cells, but required for the continued survival of immature natural killer cells. Negatively regulates TNFRSF11A signaling and osteoclastogenesis. Involved in the regulation of ciliogenesis, allowing ciliary basal bodies to migrate and dock to the plasma membrane; this process does not depend on NF-kappa-B activation. Ability to remove linear ('Met-1'-linked) polyubiquitin chains regulates innate immunity and TNF-alpha-induced necroptosis: recruited to the LUBAC complex via interaction with SPATA2 and restricts linear polyubiquitin formation on target proteins. Regulates innate immunity by restricting linear polyubiquitin formation on RIPK2 in response to NOD2 stimulation. Involved in TNF-alpha-induced necroptosis by removing linear ('Met-1'-linked) polyubiquitin chains from RIPK1, thereby regulating the kinase activity of RIPK1. Negatively regulates intestinal inflammation by removing 'Lys-63' linked polyubiquitin chain of NLRP6, thereby reducing the interaction between NLRP6 and PYCARD/ASC and formation of the NLRP6 inflammasome. Does not catalyze deubiquitination of heterotypic 'Lys-63'-/'Lys-48'-linked branched ubiquitin chains. Removes 'Lys-63' linked polyubiquitin chain of MAP3K7, which inhibits phosphorylation and blocks downstream activation of the JNK-p38 kinase cascades. Also removes 'Lys-63'-linked polyubiquitin chains of MAP3K1 and MA3P3K3, which inhibit their interaction with MAP2K1 and MAP2K2. The protein is Ubiquitin carboxyl-terminal hydrolase CYLD (Cyld) of Rattus norvegicus (Rat).